We begin with the raw amino-acid sequence, 333 residues long: Ketol-acid reductoisomerase (NADP(+)) (333 aa).

One can recognise a KARI N-terminal Rossmann domain in the interval 2-182 (AKMYYDSDAS…GCTRAGVLET (181 aa)). Residues 25–28 (YGSQ), Arg-48, Ser-51, and 83–86 (DERQ) contribute to the NADP(+) site. His-108 is a catalytic residue. NADP(+) is bound at residue Gly-134. The KARI C-terminal knotted domain occupies 183-328 (TFKEETETDL…AELRAMMPFI (146 aa)). Positions 191, 195, 227, and 231 each coordinate Mg(2+). Ser-252 is a substrate binding site.

The protein belongs to the ketol-acid reductoisomerase family. The cofactor is Mg(2+).

It catalyses the reaction (2R)-2,3-dihydroxy-3-methylbutanoate + NADP(+) = (2S)-2-acetolactate + NADPH + H(+). It carries out the reaction (2R,3R)-2,3-dihydroxy-3-methylpentanoate + NADP(+) = (S)-2-ethyl-2-hydroxy-3-oxobutanoate + NADPH + H(+). It functions in the pathway amino-acid biosynthesis; L-isoleucine biosynthesis; L-isoleucine from 2-oxobutanoate: step 2/4. The protein operates within amino-acid biosynthesis; L-valine biosynthesis; L-valine from pyruvate: step 2/4. Functionally, involved in the biosynthesis of branched-chain amino acids (BCAA). Catalyzes an alkyl-migration followed by a ketol-acid reduction of (S)-2-acetolactate (S2AL) to yield (R)-2,3-dihydroxy-isovalerate. In the isomerase reaction, S2AL is rearranged via a Mg-dependent methyl migration to produce 3-hydroxy-3-methyl-2-ketobutyrate (HMKB). In the reductase reaction, this 2-ketoacid undergoes a metal-dependent reduction by NADPH to yield (R)-2,3-dihydroxy-isovalerate. This is Ketol-acid reductoisomerase (NADP(+)) from Desulfitobacterium hafniense (strain DSM 10664 / DCB-2).